A 239-amino-acid chain; its full sequence is Pre-mRNA-splicing factor isy1 (239 aa).

It belongs to the ISY1 family. As to quaternary structure, associated with the spliceosome.

It localises to the cytoplasm. The protein localises to the nucleus. In terms of biological role, involved in pre-mRNA splicing. This is Pre-mRNA-splicing factor isy1 (msp-7) from Neurospora crassa (strain ATCC 24698 / 74-OR23-1A / CBS 708.71 / DSM 1257 / FGSC 987).